Reading from the N-terminus, the 512-residue chain is Solute carrier family 2, facilitated glucose transporter member 7 (512 aa).

The Cytoplasmic portion of the chain corresponds to 1–21 (MENKEAGTPPPIPSREGRLQP). The chain crosses the membrane as a helical span at residues 22–42 (TLLLATLSAAFGSAFQYGYNL). Over 43–78 (SVVNTPHKVFKSFYNETYFERHATFMDGKLMLLLWS) the chain is Extracellular. Asn-57 is a glycosylation site (N-linked (GlcNAc...) asparagine). A helical membrane pass occupies residues 79 to 99 (CTVSMFPLGGLLGSLLVGLLV). Over 100–107 (DSCGRKGT) the chain is Cytoplasmic. The helical transmembrane segment at 108-128 (LLINNIFAIIPAILMGVSKVA) threads the bilayer. Residues 129–138 (KAFELIVFSR) lie on the Extracellular side of the membrane. A helical transmembrane segment spans residues 139–159 (VVLGVCAGISYSALPMYLGEL). At 160–172 (APKNLRGMVGTMT) the chain is on the cytoplasmic side. Residues 173-193 (EVFVIVGVFLAQIFSLQAILG) traverse the membrane as a helical segment. Residues 194–198 (NPAGW) are Extracellular-facing. A helical transmembrane segment spans residues 199 to 219 (PVLLALTGVPALLQLLTLPFF). Residues 220–281 (PESPRYSLIQ…LHLCALRSLR (62 aa)) are Cytoplasmic-facing. The helical transmembrane segment at 282 to 302 (WQLLSIIVLMAGQQLSGINAI) threads the bilayer. D-glucose-binding positions include 294–295 (QQ) and Asn-300. Over 303-321 (NYYADTIYTSAGVEAAHSQ) the chain is Extracellular. The helical transmembrane segment at 322–342 (YVTVGSGVVNIVMTITSAVLV) threads the bilayer. Asn-331 serves as a coordination point for D-glucose. Residues 343–350 (ERLGRRHL) lie on the Cytoplasmic side of the membrane. A helical transmembrane segment spans residues 351–371 (LLAGYGICGSACLVLTVVLLF). At 372-379 (QNRVPELS) the chain is on the extracellular side. Residues 380-400 (YLGIICVFAYIAGHSIGPSPV) traverse the membrane as a helical segment. Residues 401–415 (PSVVRTEIFLQSSRR) lie on the Cytoplasmic side of the membrane. A helical transmembrane segment spans residues 416-436 (AAFMVDGAVHWLTNFIIGFLF). Residues 437–445 (PSIQEAIGA) lie on the Extracellular side of the membrane. A helical membrane pass occupies residues 446–466 (YSFIIFAGICLLTAIYIYVVI). At 467 to 512 (PETKGKTFVEINRIFAKRNRVKLPEEKEETIDAGPPTASPAKETSF) the chain is on the cytoplasmic side. Residues 491–512 (EEKEETIDAGPPTASPAKETSF) form a disordered region.

The protein belongs to the major facilitator superfamily. Sugar transporter (TC 2.A.1.1) family. Glucose transporter subfamily. Expressed in small intestine and colon. Weakly expressed in testis and prostate.

Its subcellular location is the cell membrane. The protein localises to the apical cell membrane. It carries out the reaction D-glucose(out) = D-glucose(in). It catalyses the reaction D-fructose(out) = D-fructose(in). With respect to regulation, glucose and fructose transport are inhibited by the flavonoid apigenin. In terms of biological role, probable sugar transporter. Even if its physiological substrate is subject to discussion, it is able to transport glucose and fructose. Does not transport galactose, 2-deoxy-d-glucose and xylose. The protein is Solute carrier family 2, facilitated glucose transporter member 7 of Homo sapiens (Human).